A 426-amino-acid chain; its full sequence is Glutamyl-tRNA reductase (426 aa).

Substrate contacts are provided by residues 51–54 (TCNR), Ser110, 115–117 (EAQ), and Gln121. Catalysis depends on Cys52, which acts as the Nucleophile. Residue 190–195 (GAGEMA) participates in NADP(+) binding.

It belongs to the glutamyl-tRNA reductase family. As to quaternary structure, homodimer.

It catalyses the reaction (S)-4-amino-5-oxopentanoate + tRNA(Glu) + NADP(+) = L-glutamyl-tRNA(Glu) + NADPH + H(+). Its pathway is porphyrin-containing compound metabolism; protoporphyrin-IX biosynthesis; 5-aminolevulinate from L-glutamyl-tRNA(Glu): step 1/2. Its function is as follows. Catalyzes the NADPH-dependent reduction of glutamyl-tRNA(Glu) to glutamate 1-semialdehyde (GSA). This Desulfotalea psychrophila (strain LSv54 / DSM 12343) protein is Glutamyl-tRNA reductase.